Here is a 585-residue protein sequence, read N- to C-terminus: Arginine--tRNA ligase (585 aa).

Residues 131–141 (ANPTGPMHVGH) carry the 'HIGH' region motif.

This sequence belongs to the class-I aminoacyl-tRNA synthetase family. In terms of assembly, monomer.

It is found in the cytoplasm. It carries out the reaction tRNA(Arg) + L-arginine + ATP = L-arginyl-tRNA(Arg) + AMP + diphosphate. This is Arginine--tRNA ligase from Rhizobium meliloti (strain 1021) (Ensifer meliloti).